The following is a 155-amino-acid chain: uncharacterized protein (155 aa).

Disordered stretches follow at residues 24–63 (RVGY…VVLK) and 80–155 (KAAK…DENE). Positions 43-56 (PDEDGNESDKEDEQ) are enriched in acidic residues. The residue at position 50 (serine 50) is a Phosphoserine. N6-acetyllysine is present on lysine 108. A compositionally biased stretch (polar residues) spans 128–147 (KQSPVRKNSQKQIKNSSLLS). 3 positions are modified to phosphoserine: serine 130, serine 147, and serine 150.

This is an uncharacterized protein from Rattus norvegicus (Rat).